The chain runs to 504 residues: Protein nucleotidyltransferase YdiU (504 aa).

ATP is bound by residues Gly99, Gly101, Arg102, Lys122, Asp134, Gly135, Arg185, and Arg192. Residue Asp261 is the Proton acceptor of the active site. Residues Asn262 and Asp271 each coordinate Mg(2+). Asp271 contributes to the ATP binding site.

This sequence belongs to the SELO family. It depends on Mg(2+) as a cofactor. Mn(2+) serves as cofactor.

The enzyme catalyses L-seryl-[protein] + ATP = 3-O-(5'-adenylyl)-L-seryl-[protein] + diphosphate. It catalyses the reaction L-threonyl-[protein] + ATP = 3-O-(5'-adenylyl)-L-threonyl-[protein] + diphosphate. The catalysed reaction is L-tyrosyl-[protein] + ATP = O-(5'-adenylyl)-L-tyrosyl-[protein] + diphosphate. It carries out the reaction L-histidyl-[protein] + UTP = N(tele)-(5'-uridylyl)-L-histidyl-[protein] + diphosphate. The enzyme catalyses L-seryl-[protein] + UTP = O-(5'-uridylyl)-L-seryl-[protein] + diphosphate. It catalyses the reaction L-tyrosyl-[protein] + UTP = O-(5'-uridylyl)-L-tyrosyl-[protein] + diphosphate. In terms of biological role, nucleotidyltransferase involved in the post-translational modification of proteins. It can catalyze the addition of adenosine monophosphate (AMP) or uridine monophosphate (UMP) to a protein, resulting in modifications known as AMPylation and UMPylation. This Methylococcus capsulatus (strain ATCC 33009 / NCIMB 11132 / Bath) protein is Protein nucleotidyltransferase YdiU.